Here is a 198-residue protein sequence, read N- to C-terminus: Probable GTP-binding protein EngB (198 aa).

Positions 22–195 constitute an EngB-type G domain; it reads DLPEIALAGR…WKAIHKFTKT (174 aa). Residues 30-37, 57-61, 75-78, 142-145, and 174-176 each bind GTP; these read GRSNVGKS, GKTQT, DVPG, TKAD, and FSS. Residues serine 37 and threonine 59 each contribute to the Mg(2+) site.

It belongs to the TRAFAC class TrmE-Era-EngA-EngB-Septin-like GTPase superfamily. EngB GTPase family. Requires Mg(2+) as cofactor.

Its function is as follows. Necessary for normal cell division and for the maintenance of normal septation. The sequence is that of Probable GTP-binding protein EngB from Bacillus anthracis (strain A0248).